The primary structure comprises 70 residues: Cecropin-P1 (70 aa).

The first 13 residues, 1–13 (MFLIYLFVQTAES), serve as a signal peptide directing secretion. A propeptide spans 45–70 (RRRFVAEQDAIHSRVSREVPTLSDSV) (removed in mature form).

In terms of tissue distribution, expressed in the body wall, intestine, uterus and ovary.

Its subcellular location is the secreted. Functionally, has antibacterial activity against several Gram-positive and Gram-negative bacteria. Is weakly active against yeasts. Acts by a nonpore mechanism. The chain is Cecropin-P1 (ASCEC-1) from Ascaris suum (Pig roundworm).